Reading from the N-terminus, the 348-residue chain is Centromere protein N (348 aa).

It belongs to the CENP-N/CHL4 family.

It is found in the nucleus. The protein resides in the chromosome. The protein localises to the centromere. Probable component of a centromeric complex involved in assembly of kinetochore proteins, mitotic progression and chromosome segregation. In Xenopus tropicalis (Western clawed frog), this protein is Centromere protein N (cenpn).